Consider the following 473-residue polypeptide: MINYSERIPNNVNLNENKTLQRALEQWQPSFLNWWDDMGPENSSNYDVYLRTAVSVDPKGWADFGYVKMHDYRWGIFLAPQEGEKKITFGEHKGQDVWQEVPGEYRSTLRRIIVTQGDTEPASVEQQRHLGLTAPSLYDLRNLFQVNVEEGRHLWAMVYLLHAHFGRDGREEGEALLERRSGDEDNPRILTAFNEKTPDWLSFFMFTFITDRDGKFQLASLAESAFDPLARTCKFMLTEEAHHLFVGESGIARVIQRTCEVMKELGTDDPAKLRAAGVIDLPTLQKYLNFHYSVTSDLYGAEISSNAATYYTNGLKGRFEEEKIGDDHKLQNSEYEVMDVAGDKILTRHVPALSALNERLRDDWITDVQAGVDRWNRIPAKFGFDFRFTLPHKGFHRKIGMFADVHVSPDGRLISEAEWTHQHKNWLPTESDRLYVHSLMGRCLEPGKFANWIAAPARGINNQPVNFEYVRFN.

It belongs to the benzoyl-CoA oxygenase component B family. As to quaternary structure, monomer. The subunit composition of the active BoxA/BoxB protein complex is not known. Fe cation serves as cofactor.

It carries out the reaction benzoyl-CoA + NADPH + O2 + H(+) = 2,3-epoxy-2,3-dihydrobenzoyl-CoA + NADP(+) + H2O. In terms of biological role, the BoxA/BoxB complex catalyzes the aerobic reduction/oxygenation of the aromatic ring of benzoyl-CoA to form 2,3-epoxy-2,3-dihydrobenzoyl-CoA. BoxB acts as the benzoyl-CoA oxygenase, after being reduced by the reductase component BoxA. BoxAB does not act on NADH or benzoate. This chain is Benzoyl-CoA oxygenase component B (boxB), found in Aromatoleum evansii (Azoarcus evansii).